A 697-amino-acid chain; its full sequence is MRLTVGALLACAALGLCLAVPDKTVKWCAVSEHENTKCISFRDHMKTVLPPDGPRLACVKKTSYPDCIKAISASEADAMTLDGGWVYDAGLTPNNLKPVAAEFYGSVEHPQTYYYAVAVVKKGTDFQLNQLEGKKSCHTGLGRSAGWVIPIGLLFCKLSEPRSPLEKAVSSFFSGSCVPCADPVAFPKLCQLCPGCGCSSTQPFFGYVGAFKCLKDGGGDVAFVKHTTIFEVLPEKADRDQYELLCLDNTRKPVDQYEDCYLARIPSHAVVARKNNGKEDLIWEILKVAQEHFGKGKSKDFQLFSSPLGKDLLFKDSAFGLLRVPPRMDYRLYLGHNYVTAIRNQQEGVCPEGSIDNSPVKWCALSHLERTKCDEWSIISEGKIECESAETTEDCIEKIVNGEADAMTLDGGHAYIAGQCGLVPVMAEYYESSNCAIPSQQGIFPKGYYAVAVVKASDTSITWNNLKGKKSCHTGVDRTAGWNIPMGMLYNRINHCKFDEFFSQGCAPGYEKNSTLCDLCIGPLKCAPNNKEEYNGYTGAFRCLVEKGDVAFVKHQTVLDNTEGKNPAEWAKNLKQEDFELLCPDGTRKPVKDFASCHLAQAPNHVVVSRKEKAARVKAVLTSQETLFGGSDCTGNFCLFKSTTKDLLFRDDTKCFVKLPEGTTPEKYLGAEYMQSVGNMRKCSTSRLLEACTFHKH.

The first 19 residues, methionine 1 to alanine 19, serve as a signal peptide directing secretion. 2 consecutive Transferrin-like domains span residues valine 25–glutamate 347 and valine 360–lysine 682. 2 disulfides stabilise this stretch: cysteine 28–cysteine 67 and cysteine 38–cysteine 58. Arginine 42 is subject to Dimethylated arginine. Fe(3+) contacts are provided by aspartate 82 and tyrosine 114. Disulfide bonds link cysteine 137–cysteine 213, cysteine 156–cysteine 350, cysteine 177–cysteine 193, cysteine 180–cysteine 196, cysteine 190–cysteine 198, cysteine 246–cysteine 260, cysteine 363–cysteine 395, and cysteine 373–cysteine 386. Residues threonine 139, arginine 143, alanine 145, and glycine 146 each contribute to the hydrogencarbonate site. Position 207 (tyrosine 207) interacts with Fe(3+). Histidine 268 contacts Fe(3+). Serine 388 carries the phosphoserine modification. Aspartate 410 and tyrosine 448 together coordinate Fe(3+). Disulfide bonds link cysteine 420-cysteine 692, cysteine 435-cysteine 655, cysteine 472-cysteine 543, cysteine 496-cysteine 683, cysteine 506-cysteine 520, cysteine 517-cysteine 526, cysteine 583-cysteine 597, and cysteine 633-cysteine 638. 4 residues coordinate hydrogencarbonate: threonine 474, arginine 478, alanine 480, and glycine 481. Asparagine 513 carries an N-linked (GlcNAc...) asparagine glycan. Tyrosine 537 contributes to the Fe(3+) binding site. Residue histidine 605 coordinates Fe(3+). Serine 684 carries the post-translational modification Phosphoserine.

Belongs to the transferrin family. Monomer. Part of a complex composed of SLC40A1/ferroportin, TF/transferrin and HEPH/hephaestin that transfers iron from cells to transferrin. In terms of tissue distribution, expressed by the liver and secreted in plasma.

It is found in the secreted. Its function is as follows. Transferrins are iron binding transport proteins which can bind two Fe(3+) ions in association with the binding of an anion, usually bicarbonate. It is responsible for the transport of iron from sites of absorption and heme degradation to those of storage and utilization. Serum transferrin may also have a further role in stimulating cell proliferation. This chain is Serotransferrin (Tf), found in Mus musculus (Mouse).